The chain runs to 129 residues: Glycine cleavage system H protein (129 aa).

Positions 24–106 constitute a Lipoyl-binding domain; that stretch reads LVRVGISAFA…HGEGWLLVVR (83 aa). Residue Lys-65 is modified to N6-lipoyllysine.

Belongs to the GcvH family. As to quaternary structure, the glycine cleavage system is composed of four proteins: P, T, L and H. (R)-lipoate is required as a cofactor.

Functionally, the glycine cleavage system catalyzes the degradation of glycine. The H protein shuttles the methylamine group of glycine from the P protein to the T protein. The polypeptide is Glycine cleavage system H protein (Prochlorococcus marinus (strain MIT 9303)).